Consider the following 509-residue polypeptide: Coiled-coil domain-containing protein 181 (509 aa).

A compositionally biased stretch (basic and acidic residues) spans 60 to 82 (EHTKQHSDPDKSLQDDVSPRRND). Disordered regions lie at residues 60–121 (EHTK…EEDE) and 285–367 (GEPL…EEKE). A compositionally biased stretch (polar residues) spans 320–334 (RTQSARISPVTSTYC). The stretch at 335-375 (LSPRQKELQKQLEQKREKLKREEEQRKIEEEKEKKRENDIV) forms a coiled coil. Residues 338–367 (RQKELQKQLEQKREKLKREEEQRKIEEEKE) are compositionally biased toward basic and acidic residues.

It belongs to the CCDC181 family. Homodimer. Interacts with HOOK1. Interacts with HOOK2. Interacts with HOOK3.

The protein localises to the cytoplasm. Its subcellular location is the cytoskeleton. The protein resides in the cell projection. It is found in the cilium. It localises to the flagellum. Its function is as follows. Microtubule-binding protein that localizes to the microtubular manchette of elongating spermatids. The chain is Coiled-coil domain-containing protein 181 from Macaca fascicularis (Crab-eating macaque).